A 68-amino-acid chain; its full sequence is DNA-directed RNA polymerase subunit omega (68 aa).

It belongs to the RNA polymerase subunit omega family. In terms of assembly, the RNAP catalytic core consists of 2 alpha, 1 beta, 1 beta' and 1 omega subunit. When a sigma factor is associated with the core the holoenzyme is formed, which can initiate transcription.

The enzyme catalyses RNA(n) + a ribonucleoside 5'-triphosphate = RNA(n+1) + diphosphate. In terms of biological role, promotes RNA polymerase assembly. Latches the N- and C-terminal regions of the beta' subunit thereby facilitating its interaction with the beta and alpha subunits. The protein is DNA-directed RNA polymerase subunit omega of Ruminiclostridium cellulolyticum (strain ATCC 35319 / DSM 5812 / JCM 6584 / H10) (Clostridium cellulolyticum).